Reading from the N-terminus, the 358-residue chain is Holliday junction branch migration complex subunit RuvB (358 aa).

A disordered region spans residues 1–24 (MAIKRSHNSPPATEENLLTPNPTI). Residues 8–22 (NSPPATEENLLTPNP) are compositionally biased toward polar residues. A large ATPase domain (RuvB-L) region spans residues 13-195 (TEENLLTPNP…FGLIQRLRFY (183 aa)). Residues isoleucine 34, arginine 35, glycine 76, lysine 79, threonine 80, threonine 81, 142–144 (EDY), arginine 185, tyrosine 195, and arginine 232 each bind ATP. Threonine 80 lines the Mg(2+) pocket. Residues 196 to 266 (AVEELTAIIL…LAAEGLNQLN (71 aa)) are small ATPAse domain (RuvB-S). The segment at 269–358 (SMGLDWTDRL…KDRSLPLFEF (90 aa)) is head domain (RuvB-H). Positions 324 and 329 each coordinate DNA.

Belongs to the RuvB family. As to quaternary structure, homohexamer. Forms an RuvA(8)-RuvB(12)-Holliday junction (HJ) complex. HJ DNA is sandwiched between 2 RuvA tetramers; dsDNA enters through RuvA and exits via RuvB. An RuvB hexamer assembles on each DNA strand where it exits the tetramer. Each RuvB hexamer is contacted by two RuvA subunits (via domain III) on 2 adjacent RuvB subunits; this complex drives branch migration. In the full resolvosome a probable DNA-RuvA(4)-RuvB(12)-RuvC(2) complex forms which resolves the HJ.

It is found in the cytoplasm. The enzyme catalyses ATP + H2O = ADP + phosphate + H(+). The RuvA-RuvB-RuvC complex processes Holliday junction (HJ) DNA during genetic recombination and DNA repair, while the RuvA-RuvB complex plays an important role in the rescue of blocked DNA replication forks via replication fork reversal (RFR). RuvA specifically binds to HJ cruciform DNA, conferring on it an open structure. The RuvB hexamer acts as an ATP-dependent pump, pulling dsDNA into and through the RuvAB complex. RuvB forms 2 homohexamers on either side of HJ DNA bound by 1 or 2 RuvA tetramers; 4 subunits per hexamer contact DNA at a time. Coordinated motions by a converter formed by DNA-disengaged RuvB subunits stimulates ATP hydrolysis and nucleotide exchange. Immobilization of the converter enables RuvB to convert the ATP-contained energy into a lever motion, pulling 2 nucleotides of DNA out of the RuvA tetramer per ATP hydrolyzed, thus driving DNA branch migration. The RuvB motors rotate together with the DNA substrate, which together with the progressing nucleotide cycle form the mechanistic basis for DNA recombination by continuous HJ branch migration. Branch migration allows RuvC to scan DNA until it finds its consensus sequence, where it cleaves and resolves cruciform DNA. The sequence is that of Holliday junction branch migration complex subunit RuvB from Microcystis aeruginosa (strain NIES-843 / IAM M-2473).